Reading from the N-terminus, the 219-residue chain is UPF0502 protein Ppro_2903 (219 aa).

The protein belongs to the UPF0502 family.

This chain is UPF0502 protein Ppro_2903, found in Pelobacter propionicus (strain DSM 2379 / NBRC 103807 / OttBd1).